The chain runs to 121 residues: Large ribosomal subunit protein bL19 (121 aa).

It belongs to the bacterial ribosomal protein bL19 family.

In terms of biological role, this protein is located at the 30S-50S ribosomal subunit interface and may play a role in the structure and function of the aminoacyl-tRNA binding site. The sequence is that of Large ribosomal subunit protein bL19 from Borreliella burgdorferi (strain ZS7) (Borrelia burgdorferi).